A 598-amino-acid polypeptide reads, in one-letter code: MPDIKVTPLGAGQDVGRSCILVSIGGKNIMLDCGMHMGFNDDRRFPDFSYITQNGRLTEFLDCVIISHFHLDHCGALPYMSEMVGYDGPIYMTHPTKAICPILLEDFRKITVDKKGETNFFTSQMIKDCMKKVVPLNLHQTVQVDDELEIKAYYAGHVLGAAMVQIKVGSESVVYTGDYNMTPDRHLGAAWIDKCRPDILISESTYATTIRDSKRCRERDFLKKVHETVERGGKVLIPVFALGRAQELCILLETFWERMNLKAPIYFSTGLTEKANHYYKLFITWTNQKIRKTFVQRNMFEFKHIKAFDRSYADNPGPMVVFATPGMLHAGQSLQIFKKWAGNEKNMVIMPGYCVQGTVGHKILNGQKKLEMEGRATLDVKLQVEYMSFSAHADAKGIMQLIRMAEPRNMLLVHGEAKKMEFLKDKIEQEFSISCFMPANGETTTIVTNPSVPVDISLNLLKREMALGGPLPDAKRPRTMHGTLIMKDNSLRLVSPEQALKELGLNEHQLRFTCRVQLHDPHSDTDTLSRIYTHLKSVLKSYSIQHVPDGTVIVESIVIKVTSSAEEPNLKVILLSWSYQDEELGSFLSTLLKKGLPS.

Zn(2+)-binding residues include histidine 68, histidine 70, aspartate 72, histidine 73, histidine 157, and aspartate 178. The HXHXDH motif motif lies at histidine 68 to histidine 73. Glutamate 203 is an active-site residue. Position 414 (histidine 414) interacts with Zn(2+). The Nuclear localization signal motif lies at proline 470 to methionine 480.

The protein belongs to the metallo-beta-lactamase superfamily. RNA-metabolizing metallo-beta-lactamase-like family. INTS11 subfamily. In terms of assembly, component of the Integrator complex, composed of core subunits INTS1, INTS2, INTS3, INTS4, INTS5, INTS6, INTS7, INTS8, INTS9/RC74, INTS10, INTS11/CPSF3L, INTS12, INTS13, INTS14 and INTS15. The core complex associates with protein phosphatase 2A subunits PPP2CA and PPP2R1A, to form the Integrator-PP2A (INTAC) complex. INTS11 is part of the RNA endonuclease subcomplex, composed of INTS4, INTS9, INTS11 and inositol hexakisphosphate (InsP6). Zn(2+) is required as a cofactor.

The protein localises to the nucleus. Its subcellular location is the cytoplasm. In terms of biological role, RNA endonuclease component of the integrator complex, a multiprotein complex that terminates RNA polymerase II (Pol II) transcription in the promoter-proximal region of genes. The integrator complex provides a quality checkpoint during transcription elongation by driving premature transcription termination of transcripts that are unfavorably configured for transcriptional elongation: the complex terminates transcription by (1) catalyzing dephosphorylation of the C-terminal domain (CTD) of Pol II subunit POLR2A/RPB1 and SUPT5H/SPT5, (2) degrading the exiting nascent RNA transcript via endonuclease activity and (3) promoting the release of Pol II from bound DNA. The integrator complex is also involved in terminating the synthesis of non-coding Pol II transcripts, such as enhancer RNAs (eRNAs), small nuclear RNAs (snRNAs), telomerase RNAs and long non-coding RNAs (lncRNAs). Within the integrator complex, INTS11 constitutes the RNA endonuclease subunit that degrades exiting nascent RNA transcripts. The protein is Integrator complex subunit 11 (cpsf3l) of Danio rerio (Zebrafish).